The chain runs to 701 residues: Elongation factor G (701 aa).

Residues 8 to 286 (ERIRNIGIIA…AIVHYLPSPV (279 aa)) form the tr-type G domain. Residues 17–24 (AHIDAGKT), 85–89 (DTPGH), and 139–142 (NKMD) each bind GTP.

The protein belongs to the TRAFAC class translation factor GTPase superfamily. Classic translation factor GTPase family. EF-G/EF-2 subfamily.

Its subcellular location is the cytoplasm. In terms of biological role, catalyzes the GTP-dependent ribosomal translocation step during translation elongation. During this step, the ribosome changes from the pre-translocational (PRE) to the post-translocational (POST) state as the newly formed A-site-bound peptidyl-tRNA and P-site-bound deacylated tRNA move to the P and E sites, respectively. Catalyzes the coordinated movement of the two tRNA molecules, the mRNA and conformational changes in the ribosome. The protein is Elongation factor G of Roseiflexus sp. (strain RS-1).